The chain runs to 1934 residues: Tudor domain-containing protein 15 (1934 aa).

6 Tudor domains span residues 59–117 (NVEI…LFEL), 289–347 (CDNF…FILV), 531–589 (KPEP…FCEL), 799–856 (PYEI…FLLL), 1011–1070 (DSNK…FPEL), and 1342–1401 (KPLV…FLTV). Residues 1490-1510 (VRPGDNEMKKGKSNESEGSMN) form a disordered region. The segment covering 1491–1504 (RPGDNEMKKGKSNE) has biased composition (basic and acidic residues). Tudor domains are found at residues 1574–1633 (SIEK…IRNI) and 1780–1838 (FIIP…PEEL).

The sequence is that of Tudor domain-containing protein 15 (TDRD15) from Homo sapiens (Human).